Here is a 380-residue protein sequence, read N- to C-terminus: Cytochrome b (380 aa).

Helical transmembrane passes span 34-54 (FGSLLGICLITQIATGLFLAM), 78-99 (WLVRNIHANGASFFFICIYLHI), 114-134 (WNIGVILLFLVMATAFVGYVL), and 179-199 (FFAFHFLFPFLIVGASILHLL). Heme b is bound by residues His-84 and His-98. Positions 183 and 197 each coordinate heme b. His-202 is a binding site for a ubiquinone. Helical transmembrane passes span 227 to 247 (YKDTLGFLIMLMMLTLLSMLS), 289 to 309 (LGGVLALLASIMILMLIPMIH), 321 to 341 (MTQFLFWLMVSNTLILTWIGG), and 348 to 368 (FIEIGQAASILYFLLFIIFMP).

Belongs to the cytochrome b family. The cytochrome bc1 complex contains 3 respiratory subunits (MT-CYB, CYC1 and UQCRFS1), 2 core proteins (UQCRC1 and UQCRC2) and probably 6 low-molecular weight proteins. It depends on heme b as a cofactor.

The protein resides in the mitochondrion inner membrane. Component of the ubiquinol-cytochrome c reductase complex (complex III or cytochrome b-c1 complex) that is part of the mitochondrial respiratory chain. The b-c1 complex mediates electron transfer from ubiquinol to cytochrome c. Contributes to the generation of a proton gradient across the mitochondrial membrane that is then used for ATP synthesis. The sequence is that of Cytochrome b (mt-cyb) from Ranodon sibiricus (Siberian salamander).